A 317-amino-acid chain; its full sequence is Adenosine receptor A3 (317 aa).

Over 1-14 (MPVNSTAVSWTSVT) the chain is Extracellular. N-linked (GlcNAc...) asparagine glycosylation is present at N4. The chain crosses the membrane as a helical span at residues 15–37 (YITVEILIGLCAIVGNVLVIWVV). The Cytoplasmic portion of the chain corresponds to 38–48 (KLNPSLQTTTF). The helical transmembrane segment at 49–72 (YFIVSLALADIAVGVLVMPLAIVI) threads the bilayer. Residues 73 to 84 (SLGVTIHFYSCL) lie on the Extracellular side of the membrane. An intrachain disulfide couples C83 to C165. A helical transmembrane segment spans residues 85 to 106 (FMTCLMLIFTHASIMSLLAIAV). Residues 107-126 (DRYLRVKLTVRYRRVTTQRR) lie on the Cytoplasmic side of the membrane. The chain crosses the membrane as a helical span at residues 127 to 148 (IWLALGLCWLVSFLVGLTPMFG). The Extracellular portion of the chain corresponds to 149-176 (WNMKLSSADENLTFLPCRFRSVMRMDYM). N159 is a glycosylation site (N-linked (GlcNAc...) asparagine). Residues 177–197 (VYFSFFLWILVPLVVMCAIYF) traverse the membrane as a helical segment. Topologically, residues 198–230 (DIFYIIRNRLSQSFSGSRETGAFYGREFKTAKS) are cytoplasmic. A helical transmembrane segment spans residues 231–254 (LLLVLFLFALCWLPLSIINCILYF). Over 255–260 (DGQVPQ) the chain is Extracellular. Residues 261 to 283 (TVLYLGILLSHANSMMNPIVYAY) form a helical membrane-spanning segment. Topologically, residues 284-317 (KIKKFKETYLLILKACVMCQPSKSMDPSTEQTSE) are cytoplasmic. C302 carries S-palmitoyl cysteine lipidation.

It belongs to the G-protein coupled receptor 1 family. Phosphorylation on Thr-315 and Ser-316 may be crucial for rapid desensitization. Phosphorylation on Thr-315 may be necessary for phosphorylation on Ser-316 to occur. In terms of tissue distribution, most abundant in lung, spleen and pineal gland. Moderate expression in brain, kidney and testis.

It localises to the cell membrane. In terms of biological role, receptor for adenosine. The activity of this receptor is mediated by G proteins which inhibits adenylyl cyclase. The polypeptide is Adenosine receptor A3 (ADORA3) (Ovis aries (Sheep)).